The sequence spans 478 residues: Uronate isomerase (478 aa).

Belongs to the metallo-dependent hydrolases superfamily. Uronate isomerase family.

The catalysed reaction is D-glucuronate = D-fructuronate. It carries out the reaction aldehydo-D-galacturonate = keto-D-tagaturonate. It functions in the pathway carbohydrate metabolism; pentose and glucuronate interconversion. This Bacillus pumilus (strain SAFR-032) protein is Uronate isomerase.